The primary structure comprises 283 residues: Bifunctional protein FolD (283 aa).

NADP(+) is bound by residues 165 to 167 (GRS) and Ser-190.

This sequence belongs to the tetrahydrofolate dehydrogenase/cyclohydrolase family. As to quaternary structure, homodimer.

The enzyme catalyses (6R)-5,10-methylene-5,6,7,8-tetrahydrofolate + NADP(+) = (6R)-5,10-methenyltetrahydrofolate + NADPH. It catalyses the reaction (6R)-5,10-methenyltetrahydrofolate + H2O = (6R)-10-formyltetrahydrofolate + H(+). Its pathway is one-carbon metabolism; tetrahydrofolate interconversion. Its function is as follows. Catalyzes the oxidation of 5,10-methylenetetrahydrofolate to 5,10-methenyltetrahydrofolate and then the hydrolysis of 5,10-methenyltetrahydrofolate to 10-formyltetrahydrofolate. The sequence is that of Bifunctional protein FolD from Variovorax paradoxus (strain S110).